A 41-amino-acid polypeptide reads, in one-letter code: Alpha-1B-glycoprotein (41 aa).

N-linked (GlcNAc...) asparagine glycosylation is present at asparagine 23.

As to quaternary structure, interacts with CRISP3. In terms of processing, glycosylated. In terms of tissue distribution, plasma.

It is found in the secreted. The polypeptide is Alpha-1B-glycoprotein (A1BG) (Equus caballus (Horse)).